Consider the following 2002-residue polypeptide: [F-actin]-monooxygenase MICAL3 (2002 aa).

Residues 2-494 (EERKHETMNP…RHLYDTGETK (493 aa)) form a monooxygenase domain region. FAD is bound by residues Cys-97, 116–118 (EKR), 123–125 (RNN), Phe-183, Tyr-298, and Asp-398. The Calponin-homology (CH) domain maps to 518–624 (VARSSKLLGW…YLTQFYEMFK (107 aa)). Ser-649 carries the phosphoserine modification. The interval 658–706 (GQTISRKRSPKDKKEKDLDGAGKRRKTSQSEEEEAPRGHRGERPTLVST) is disordered. Residues 663–684 (RKRSPKDKKEKDLDGAGKRRKT) carry the Nuclear localization signal motif. Residues 669–679 (DKKEKDLDGAG) are compositionally biased toward basic and acidic residues. Phosphoserine is present on residues Ser-685 and Ser-687. Positions 762 to 824 (DTCYFCQKRV…KPHYCYRLSG (63 aa)) constitute an LIM zinc-binding domain. Residues Cys-764, Cys-767, His-785, Cys-788, Cys-791, Cys-794, Cys-814, and His-817 each contribute to the Zn(2+) site. The tract at residues 835 to 883 (PLSGKEAKGPLQDGATTDANGRANAVASSTERTPGSGVNGLEEPSIAKR) is disordered. Residue Thr-887 is modified to Phosphothreonine. 3 disordered regions span residues 907–1313 (QEVP…SPLA), 1335–1776 (RRSL…GKHR), and 1791–1821 (LSFS…TYTE). Acidic residues predominate over residues 938–950 (SEMEEEGEEEEEE). Ser-977 is subject to Phosphoserine. Acidic residues predominate over residues 991–1017 (NEEEEEEEEEYEEEEEEDYDEEEEESS). Residues 1041–1054 (HWTHIREREEEERM) show a composition bias toward basic and acidic residues. Over residues 1055–1066 (APASESSASGAP) the composition is skewed to low complexity. A compositionally biased stretch (acidic residues) spans 1068-1102 (DENDLEEDVDSEPAEIEGEAAEDGDPGDTGAELDD). Phosphoserine occurs at positions 1134, 1143, 1160, and 1192. Polar residues predominate over residues 1150-1163 (GPSQATSPIRSPQE). The segment covering 1191–1218 (KSPEERLFPEPLLPKEKPKADAPSDLKA) has biased composition (basic and acidic residues). Over residues 1239–1258 (PGSPQPQPPVAASTPPPSPL) the composition is skewed to pro residues. 2 stretches are compositionally biased toward polar residues: residues 1268-1280 (TEAT…QSPI) and 1288-1302 (KTST…QSQS). Ser-1274 carries the phosphoserine modification. Residue Thr-1276 is modified to Phosphothreonine. The residue at position 1278 (Ser-1278) is a Phosphoserine. Phosphoserine is present on residues Ser-1310 and Ser-1337. Thr-1341 carries the phosphothreonine modification. 2 positions are modified to phosphoserine: Ser-1371 and Ser-1384. The span at 1407–1422 (PSDRELRSAQEERREL) shows a compositional bias: basic and acidic residues. Low complexity predominate over residues 1423-1435 (SSSSGLGLHGSSS). Position 1433 is a phosphoserine (Ser-1433). The segment covering 1436–1451 (NMKTLGSQSFNTSDSA) has biased composition (polar residues). Thr-1454 bears the Phosphothreonine mark. The span at 1456-1467 (PSSPPPPPPPGE) shows a compositional bias: pro residues. The span at 1516–1530 (SVEEIPFADDVEDTY) shows a compositional bias: acidic residues. Residues 1588–1604 (EAKELAEERMRAREKSV) are compositionally biased toward basic and acidic residues. Ser-1649 is subject to Phosphoserine. Position 1651 is a phosphothreonine (Thr-1651). The segment covering 1657 to 1668 (GSEEPTLKHEAT) has biased composition (basic and acidic residues). The span at 1674-1694 (SPPSDSGGPDGSFTSSEGSSG) shows a compositional bias: low complexity. Residues 1695-1713 (KSKKRSSLFSPRRNKKEKK) show a composition bias toward basic residues. Phosphoserine occurs at positions 1701 and 1704. Residues 1760 to 1769 (CPSTPSSGAT) are compositionally biased toward polar residues. Basic and acidic residues predominate over residues 1804–1820 (VLEKSSQKSRREPRTYT). A coiled-coil region spans residues 1821–1992 (EEELNAKLTR…EEDKDLEAAM (172 aa)). The 150-residue stretch at 1841-1990 (KQEELKRLHR…EREEDKDLEA (150 aa)) folds into the bMERB domain. Ser-1912 is modified (phosphoserine).

This sequence belongs to the Mical family. As to quaternary structure, interacts with RAB1B, RAB8A, RAB10, RAB13 and RAB15 (in their GTP-bound forms); binding to RAB1B is of low affinity compared to other Rab proteins; at least in case of RAB8A can bind 2 molecules of RAB8A simultaneously through a high and a low affinity binding site, respectively. Interacts with ERC1 and RAB8A; may bridge ERC1 with RAB8A. Interacts with KIF23 and ERC1; enhances the interaction between KIF23 and ERC1. Interacts with NINL isoform 2. It depends on FAD as a cofactor. In terms of tissue distribution, ubiquitous.

It is found in the cytoplasm. The protein resides in the cell cortex. Its subcellular location is the cytoskeleton. It localises to the nucleus. The protein localises to the midbody. It is found in the spindle. The protein resides in the cilium basal body. It carries out the reaction L-methionyl-[F-actin] + NADPH + O2 + H(+) = L-methionyl-(R)-S-oxide-[F-actin] + NADP(+) + H2O. In terms of biological role, monooxygenase that promotes depolymerization of F-actin by mediating oxidation of specific methionine residues on actin to form methionine-sulfoxide, resulting in actin filament disassembly and preventing repolymerization. In the absence of actin, it also functions as a NADPH oxidase producing H(2)O(2). Seems to act as Rab effector protein and plays a role in vesicle trafficking. Involved in exocytic vesicles tethering and fusion: the monooxygenase activity is required for this process and implicates RAB8A associated with exocytotic vesicles. Required for cytokinesis. Contributes to stabilization and/or maturation of the intercellular bridge independently of its monooxygenase activity. Promotes recruitment of Rab8 and ERC1 to the intercellular bridge, and together these proteins are proposed to function in timely abscission. The sequence is that of [F-actin]-monooxygenase MICAL3 (MICAL3) from Homo sapiens (Human).